The chain runs to 553 residues: Putative ABC transporter ATP-binding protein BCE_3323 (553 aa).

ABC transporter domains lie at 7-245 (AEIN…FRPF) and 295-527 (LSAE…SINR). ATP-binding positions include 41 to 48 (GGSGSGKT) and 329 to 336 (GKNGTGKS).

It belongs to the ABC transporter superfamily.

The protein resides in the cell membrane. Its function is as follows. Probably part of an ABC transporter complex. Responsible for energy coupling to the transport system. This Bacillus cereus (strain ATCC 10987 / NRS 248) protein is Putative ABC transporter ATP-binding protein BCE_3323.